A 264-amino-acid polypeptide reads, in one-letter code: S-adenosylmethionine decarboxylase proenzyme (264 aa).

Ser111 functions as the Schiff-base intermediate with substrate; via pyruvic acid in the catalytic mechanism. Residue Ser111 is modified to Pyruvic acid (Ser); by autocatalysis. His116 serves as the catalytic Proton acceptor; for processing activity. The active-site Proton donor; for catalytic activity is Cys139.

It belongs to the prokaryotic AdoMetDC family. Type 2 subfamily. Heterooctamer of four alpha and four beta chains arranged as a tetramer of alpha/beta heterodimers. Pyruvate is required as a cofactor. Post-translationally, is synthesized initially as an inactive proenzyme. Formation of the active enzyme involves a self-maturation process in which the active site pyruvoyl group is generated from an internal serine residue via an autocatalytic post-translational modification. Two non-identical subunits are generated from the proenzyme in this reaction, and the pyruvate is formed at the N-terminus of the alpha chain, which is derived from the carboxyl end of the proenzyme. The post-translation cleavage follows an unusual pathway, termed non-hydrolytic serinolysis, in which the side chain hydroxyl group of the serine supplies its oxygen atom to form the C-terminus of the beta chain, while the remainder of the serine residue undergoes an oxidative deamination to produce ammonia and the pyruvoyl group blocking the N-terminus of the alpha chain.

The enzyme catalyses S-adenosyl-L-methionine + H(+) = S-adenosyl 3-(methylsulfanyl)propylamine + CO2. Its pathway is amine and polyamine biosynthesis; S-adenosylmethioninamine biosynthesis; S-adenosylmethioninamine from S-adenosyl-L-methionine: step 1/1. Functionally, catalyzes the decarboxylation of S-adenosylmethionine to S-adenosylmethioninamine (dcAdoMet), the propylamine donor required for the synthesis of the polyamines spermine and spermidine from the diamine putrescine. The polypeptide is S-adenosylmethionine decarboxylase proenzyme (Geobacillus thermodenitrificans (strain NG80-2)).